The following is a 382-amino-acid chain: Pyrimidine monooxygenase RutA (382 aa).

Residues 68–69, Asn-134, Glu-143, 159–160, and Ser-209 contribute to the FMN site; these read IK and RY.

The protein belongs to the NtaA/SnaA/DszA monooxygenase family. RutA subfamily.

The enzyme catalyses uracil + FMNH2 + NADH + O2 = (Z)-3-ureidoacrylate + FMN + NAD(+) + H2O + H(+). It catalyses the reaction thymine + FMNH2 + NADH + O2 = (Z)-2-methylureidoacrylate + FMN + NAD(+) + H2O + H(+). Its function is as follows. Catalyzes the pyrimidine ring opening between N-3 and C-4 by an unusual flavin hydroperoxide-catalyzed mechanism, adding oxygen atoms in the process to yield ureidoacrylate peracid, that immediately reacts with FMN forming ureidoacrylate and FMN-N(5)-oxide. The FMN-N(5)-oxide reacts spontaneously with NADH to produce FMN. Requires the flavin reductase RutF to regenerate FMN in vivo. The sequence is that of Pyrimidine monooxygenase RutA from Escherichia coli O55:H7 (strain CB9615 / EPEC).